The primary structure comprises 197 residues: Syndecan-4 (197 aa).

An N-terminal signal peptide occupies residues 1-19; that stretch reads MPLPRAAFLLGLLLAAAAA. Over 20 to 147 the chain is Extracellular; that stretch reads ESVRETETMD…SIFERTEVLT (128 aa). Serine 38, serine 65, and serine 67 each carry an O-linked (Xyl...) (glycosaminoglycan) serine glycan. Residues asparagine 124 and asparagine 136 are each glycosylated (N-linked (GlcNAc...) asparagine). The helical transmembrane segment at 148–168 threads the bilayer; the sequence is ALIAGGAVGLLFAVFLILLLV. At 169 to 197 the chain is on the cytoplasmic side; the sequence is YRMKKKDEGSYDLGKKPIYKKAPTNEFYA.

Belongs to the syndecan proteoglycan family. As to quaternary structure, interacts with SDOS. In terms of processing, O-glycosylated; contains both chondroitin sulfate and heparan sulfate. Ser-38, Ser-65 and Ser-67 can all be modified by either chondroitin sulfate or heparan sulfate, and the protein exists in forms that contain only chondroitin sulfate, only heparan sulfate and both chondroitin sulfate and heparan sulfate.

The protein localises to the membrane. Its function is as follows. Cell surface proteoglycan which regulates exosome biogenesis in concert with SDCBP and PDCD6IP. In Gallus gallus (Chicken), this protein is Syndecan-4 (SDC4).